A 226-amino-acid polypeptide reads, in one-letter code: PKHD-type hydroxylase Bpet2704 (226 aa).

The Fe2OG dioxygenase domain occupies 78 to 178 (KIFPPLFNRY…RISAFFWMQS (101 aa)). Fe cation-binding residues include His-96, Asp-98, and His-159. Arg-169 provides a ligand contact to 2-oxoglutarate.

It depends on Fe(2+) as a cofactor. The cofactor is L-ascorbate.

The sequence is that of PKHD-type hydroxylase Bpet2704 from Bordetella petrii (strain ATCC BAA-461 / DSM 12804 / CCUG 43448).